The chain runs to 369 residues: Flagellar P-ring protein (369 aa).

An N-terminal signal peptide occupies residues Met-1–Ala-23.

It belongs to the FlgI family. As to quaternary structure, the basal body constitutes a major portion of the flagellar organelle and consists of four rings (L,P,S, and M) mounted on a central rod.

The protein resides in the periplasm. The protein localises to the bacterial flagellum basal body. Assembles around the rod to form the L-ring and probably protects the motor/basal body from shearing forces during rotation. This Pectobacterium carotovorum subsp. carotovorum (strain PC1) protein is Flagellar P-ring protein.